Reading from the N-terminus, the 176-residue chain is Inner membrane-spanning protein YciB (176 aa).

A run of 6 helical transmembrane segments spans residues 3-23, 24-44, 49-69, 81-101, 121-141, and 149-169; these read FLFD…WGIF, TATA…AFRH, TMLW…LVLH, LYWL…NNLI, VAWA…VHNF, and FKLF…SLWL.

This sequence belongs to the YciB family.

It localises to the cell inner membrane. Its function is as follows. Plays a role in cell envelope biogenesis, maintenance of cell envelope integrity and membrane homeostasis. This Burkholderia vietnamiensis (strain G4 / LMG 22486) (Burkholderia cepacia (strain R1808)) protein is Inner membrane-spanning protein YciB.